The chain runs to 232 residues: Phosphate import ATP-binding protein PstB (232 aa).

One can recognise an ABC transporter domain in the interval 1-227 (MFNINMEIKE…PKDRRTENYI (227 aa)). Residue 18–25 (GPSGCGKT) participates in ATP binding.

The protein belongs to the ABC transporter superfamily. Phosphate importer (TC 3.A.1.7) family. The complex is composed of two ATP-binding proteins (PstB), two transmembrane proteins (PstC and PstA) and a solute-binding protein (PstS).

The protein localises to the cell membrane. It catalyses the reaction phosphate(out) + ATP + H2O = ADP + 2 phosphate(in) + H(+). Functionally, part of the ABC transporter complex PstSACB involved in phosphate import. Responsible for energy coupling to the transport system. This Mycoplasma mycoides subsp. mycoides SC (strain CCUG 32753 / NCTC 10114 / PG1) protein is Phosphate import ATP-binding protein PstB.